The sequence spans 83 residues: Gas vesicle protein G2 (83 aa).

The protein belongs to the gas vesicle GvpG family. In terms of assembly, gvpF to GvpM interact with each other in vitro, and may form multi-subunit complex(es).

The protein resides in the gas vesicle. In terms of biological role, proteins GvpF to GvpM might be involved in nucleating gas vesicle formation. A minor component of the gas vesicle. Gas vesicles are hollow, gas filled proteinaceous nanostructures found in several microbial planktonic microorganisms. They allow positioning of halobacteria at the optimal depth for growth in the poorly aerated, shallow brine pools of their habitat. Functionally, expression of 2 c-vac DNA fragments containing 2 divergently transcribed regions (gvpE-gvpF-gvpG-gvpH-gvpI-gvpJ-gvpK-gvpL-gvpM and gvpA-gvpC-gvpN-gvpO) allows H.volcanii to produce gas vesicles. In Halobacterium salinarum (strain ATCC 700922 / JCM 11081 / NRC-1) (Halobacterium halobium), this protein is Gas vesicle protein G2.